We begin with the raw amino-acid sequence, 118 residues long: Large ribosomal subunit protein bL20 (118 aa).

It belongs to the bacterial ribosomal protein bL20 family.

In terms of biological role, binds directly to 23S ribosomal RNA and is necessary for the in vitro assembly process of the 50S ribosomal subunit. It is not involved in the protein synthesizing functions of that subunit. The protein is Large ribosomal subunit protein bL20 of Pelagibacter ubique (strain HTCC1062).